A 435-amino-acid chain; its full sequence is Eukaryotic translation initiation factor 3 subunit E (435 aa).

The 174-residue stretch at 219–392 folds into the PCI domain; that stretch reads FFNHAKGRDL…GHVVMGTQPL (174 aa).

Belongs to the eIF-3 subunit E family. As to quaternary structure, component of the eukaryotic translation initiation factor 3 (eIF-3) complex.

The protein resides in the cytoplasm. Its function is as follows. Component of the eukaryotic translation initiation factor 3 (eIF-3) complex, which is involved in protein synthesis of a specialized repertoire of mRNAs and, together with other initiation factors, stimulates binding of mRNA and methionyl-tRNAi to the 40S ribosome. The eIF-3 complex specifically targets and initiates translation of a subset of mRNAs involved in cell proliferation. The protein is Eukaryotic translation initiation factor 3 subunit E (eIF3-S6) of Aedes aegypti (Yellowfever mosquito).